The chain runs to 273 residues: MKLIENWFSERYSDNLQLSFRVSDQLLSIKTDYQRIDLFDTYDFGKLLAIDGTVQLTERDEYIYHELITMIPYHMTKNPPQSALVIGGGDGGAARRLLDLGLNKIVNVEIDGQVVEVSKRFFPDLSSAFTDKRVNLIIDDGIKYVRKCNEKFDLVIIDSTDPEGPAEGLFSMEFYSDITKILSDGGVIVSQSGSPFYQPKALKLAYTGMRRLFKDVKVYTGFIPTYPSGFWSFTIASEDAMNPRKPAIKGKYFNEDVLDGVFKLPQFVKDLIT.

One can recognise a PABS domain in the interval 5-238; the sequence is ENWFSERYSD…GFWSFTIASE (234 aa). An S-methyl-5'-thioadenosine-binding site is contributed by Q34. Spermidine-binding residues include H65 and D90. S-methyl-5'-thioadenosine is bound by residues E109 and 140–141; that span reads DG. Residue D158 is the Proton acceptor of the active site. Position 158 to 161 (158 to 161) interacts with spermidine; the sequence is DSTD. P165 contributes to the S-methyl-5'-thioadenosine binding site.

Belongs to the spermidine/spermine synthase family. As to quaternary structure, homodimer or homotetramer.

It localises to the cytoplasm. It catalyses the reaction S-adenosyl 3-(methylsulfanyl)propylamine + putrescine = S-methyl-5'-thioadenosine + spermidine + H(+). It participates in amine and polyamine biosynthesis; spermidine biosynthesis; spermidine from putrescine: step 1/1. Catalyzes the irreversible transfer of a propylamine group from the amino donor S-adenosylmethioninamine (decarboxy-AdoMet) to putrescine (1,4-diaminobutane) to yield spermidine. This Thermoplasma volcanium (strain ATCC 51530 / DSM 4299 / JCM 9571 / NBRC 15438 / GSS1) protein is Polyamine aminopropyltransferase.